A 464-amino-acid chain; its full sequence is Chitobiosyldiphosphodolichol beta-mannosyltransferase (464 aa).

Over methionine 1 to alanine 2 the chain is Lumenal. The helical transmembrane segment at alanine 3–tryptophan 23 threads the bilayer. Over lysine 24–arginine 99 the chain is Cytoplasmic. An intramembrane region (helical) is located at residues valine 100 to tryptophan 120. The Cytoplasmic portion of the chain corresponds to arginine 121–threonine 464. Position 242 is a phosphoserine (serine 242). The segment at serine 242–threonine 261 is disordered.

It belongs to the glycosyltransferase group 1 family. Glycosyltransferase 33 subfamily.

It localises to the endoplasmic reticulum membrane. The enzyme catalyses an N,N'-diacetylchitobiosyl-diphospho-di-trans,poly-cis-dolichol + GDP-alpha-D-mannose = a beta-D-Man-(1-&gt;4)-beta-D-GlcNAc-(1-&gt;4)-alpha-D-GlcNAc-diphospho-di-trans,poly-cis-dolichol + GDP + H(+). Its pathway is protein modification; protein glycosylation. Functionally, mannosyltransferase that operates in the biosynthetic pathway of dolichol-linked oligosaccharides, the glycan precursors employed in protein asparagine (N)-glycosylation. The assembly of dolichol-linked oligosaccharides begins on the cytosolic side of the endoplasmic reticulum membrane and finishes in its lumen. The sequential addition of sugars to dolichol pyrophosphate produces dolichol-linked oligosaccharides containing fourteen sugars, including two GlcNAcs, nine mannoses and three glucoses. Once assembled, the oligosaccharide is transferred from the lipid to nascent proteins by oligosaccharyltransferases. Catalyzes, on the cytoplasmic face of the endoplasmic reticulum, the addition of the first mannose residues to the dolichol-linked oligosaccharide chain, to produce Man1GlcNAc(2)-PP-dolichol core oligosaccharide. Man1GlcNAc(2)-PP-dolichol is a substrate for ALG2, the following enzyme in the biosynthetic pathway. The polypeptide is Chitobiosyldiphosphodolichol beta-mannosyltransferase (Pongo abelii (Sumatran orangutan)).